The chain runs to 408 residues: Peptidase T (408 aa).

Residue His-78 coordinates Zn(2+). Asp-80 is a catalytic residue. Asp-141 serves as a coordination point for Zn(2+). Glu-175 functions as the Proton acceptor in the catalytic mechanism. Residues Glu-176, Asp-198, and His-380 each coordinate Zn(2+).

Belongs to the peptidase M20B family. The cofactor is Zn(2+).

It localises to the cytoplasm. The enzyme catalyses Release of the N-terminal residue from a tripeptide.. In terms of biological role, cleaves the N-terminal amino acid of tripeptides. The sequence is that of Peptidase T from Halothermothrix orenii (strain H 168 / OCM 544 / DSM 9562).